We begin with the raw amino-acid sequence, 562 residues long: MYDRAPRFTQLTLSSTTSEIGPGTYNINRSLGGDRGSYAPFLSLSIRDSGFLGSASALHSPGPGQYNSDITRNHVLGGNSLQNRSKRFDDVLSDVPGPGAYNVTNDVSPARKIKAKSPKITSKAVRPSLSPAAPSIPSPGQAFGYEEDAQGVLHKHKVPSRDHSLGPAFYSPAPEELWSSQKYKGVQFGKMSGRREPLKGADEPGPGHYELQEDQTVQYENVNVKREQRSRSELSIPRYHELVPLQEEKKGVPGPGQYYIKSQFETSSNTHRPAQSPPFLSQAQRFSPVKDETPPVGAYNDPRCALEILKKGRALNKNPFGQTAVRFLPENRSKATPGPGAYNMFGYGLAQESLKKASLQSSRKAAFGSVAQRRIFLPSKEEMSTPGPTQYKVEKTNEALYKKQSTAAFKSASDRLVVSLFAKDTPPPGSYNVSQSFEKTQCLHQYSKPRNENARKRQSCFLSAASRNTDVLHNDPHTPGPAYYSPDVKSSSTLALIISKEDRFKDPKDEVPGPTAYELSPVIMDTVLKGTFNVTLHNPLMSSTRSLSSHRSWRKPTAHSSA.

3 STPGR repeats span residues 21-31, 60-73, and 96-118; these read GPGTYNINRSL, SPGP…ITRN, and PGPG…AKSP. Disordered stretches follow at residues 114-136 and 192-215; these read KAKS…APSI and SGRR…QEDQ. The segment covering 127 to 136 has biased composition (low complexity); the sequence is PSLSPAAPSI. Residues 193–202 show a composition bias toward basic and acidic residues; the sequence is GRREPLKGAD. 6 STPGR repeats span residues 204–227, 253–271, 336–350, 385–409, 425–462, and 478–492; these read PGPG…VKRE, PGPG…SNTH, TPGP…YGLA, TPGP…TAAF, TPPP…SCFL, and TPGP…KSSS. The tract at residues 543-562 is disordered; sequence STRSLSSHRSWRKPTAHSSA. Over residues 551–562 the composition is skewed to basic residues; the sequence is RSWRKPTAHSSA.

This Danio rerio (Zebrafish) protein is Sperm-tail PG-rich repeat-containing protein 2 (stpg2).